Reading from the N-terminus, the 719-residue chain is MALKDYVLEKDKVKKFLQEFYQDDESGKKQFKYGNQLVQLAHREQVAMYVDLDDIAEDDPELVDSICENTKRYARLFADAVQELLPQYKEREVVNKDVLDVYIEHRLMMEQRSRDPGAARSPQNQYPPELMRRFELYFQGPSSNKPRVIREVRADSVGKLVTVRGIVTRVSEVKPRMVVATYTCDQCGAETYQPIQSPTFMPLIMCPSQECQTNRSGGRLYLQTRGSKFIKFQEMKMQEHSDQVPVGNIPRSITVLVEGENTRIAQPGDHVSVTGIFLPILRTGFRQMVQGLLSETYLEAHRIVKMSKSEEDESGAGELTREELRQITEEDFYEKLAASIAPEIYGHEDVKKALLLLLVGGVDQSPRGMKIRGNINICLMGDPGVAKSQLLSYIDRLAPRSQYTTGRGSSGVGLTAAVLRDSVSGELTLEGGALVLADQGVCCIDEFDKMAEADRTAIHEVMEQQTISIAKAGILTTLNARCSILAAANPAYGRYNPRRSLEQNIQLPAALLSRFDLLWLIQDRPDRDNDLRLAQHITYVHQHSRQPPAQFEPLDMKLMRRYIAMCREKQPAVPESLADYITAAYVEMRREAWASKDATYTSARTLLAILRLSTALARLRMVDTVEKEDVNEAIRLMEMSKDSLLGDKGQTARTQRPADVIFATVRELVSEGQSVRFSEAEQRCISRGFTPAQFQAALDEYEELNVWQVNTARTRITFV.

The residue at position 2 (Ala-2) is an N-acetylalanine. Residues Lys-15 and Lys-28 each participate in a glycyl lysine isopeptide (Lys-Gly) (interchain with G-Cter in SUMO2) cross-link. Phosphoserine is present on residues Ser-121 and Ser-314. One can recognise an MCM domain in the interval 332–538 (FYEKLAASIA…NDLRLAQHIT (207 aa)). Tyr-345 serves as a coordination point for ATP. A Phosphoserine modification is found at Ser-365. Residues Gly-384, Ala-386, Lys-387, Ser-388, and Asn-489 each coordinate ATP. Ser-500 bears the Phosphoserine mark. The short motif at 513 to 516 (SRFD) is the Arginine finger element. ATP is bound at residue Arg-514. The tract at residues 521–564 (IQDRPDRDNDLRLAQHITYVHQHSRQPPAQFEPLDMKLMRRYIA) is interaction with RAD17. The interval 577–719 (LADYITAAYV…NTARTRITFV (143 aa)) is interaction with ATRIP. Arg-604 is an ATP binding site. Ser-678 is modified (phosphoserine).

Belongs to the MCM family. In terms of assembly, component of the MCM2-7 complex. The complex forms a toroidal hexameric ring with the proposed subunit order MCM2-MCM6-MCM4-MCM7-MCM3-MCM5. Component of the CMG helicase complex, a hexameric ring of related MCM2-7 subunits stabilized by CDC45 and the tetrameric GINS complex. Interacts with the ATR-ATRIP complex and with RAD17. Interacts with TIPIN. Interacts with MCMBP. Interacts with ANKRD17. Component of the replisome complex composed of at least DONSON, MCM2, MCM7, PCNA and TICRR. In terms of processing, O-glycosylated (O-GlcNAcylated), in a cell cycle-dependent manner. Ubiquitinated by ECS(LRR1) E3 ubiquitin-protein ligase complex when forks converge following formation of DNA interstrand cross-links. During mitosis, ubiquitinated by TRAIP when forks converge following formation of DNA interstrand cross-links. Short ubiquitin chains on MCM7 promote recruitment of DNA glycosylase NEIL3. If the interstrand cross-link cannot be cleaved by NEIL3, the ubiquitin chains continue to grow on MCM7, promoting the unloading of the CMG helicase complex by the VCP/p97 ATPase.

The protein localises to the nucleus. It localises to the chromosome. The catalysed reaction is ATP + H2O = ADP + phosphate + H(+). In terms of biological role, acts as a component of the MCM2-7 complex (MCM complex) which is the replicative helicase essential for 'once per cell cycle' DNA replication initiation and elongation in eukaryotic cells. Core component of CDC45-MCM-GINS (CMG) helicase, the molecular machine that unwinds template DNA during replication, and around which the replisome is built. The active ATPase sites in the MCM2-7 ring are formed through the interaction surfaces of two neighboring subunits such that a critical structure of a conserved arginine finger motif is provided in trans relative to the ATP-binding site of the Walker A box of the adjacent subunit. The six ATPase active sites, however, are likely to contribute differentially to the complex helicase activity. Required for S-phase checkpoint activation upon UV-induced damage. The chain is DNA replication licensing factor MCM7 (MCM7) from Bos taurus (Bovine).